We begin with the raw amino-acid sequence, 222 residues long: Small ribosomal subunit protein uS3 (222 aa).

In terms of domain architecture, KH type-2 spans 39 to 107 (VREFLHKKLA…PVQINIEEVR (69 aa)).

Belongs to the universal ribosomal protein uS3 family. As to quaternary structure, part of the 30S ribosomal subunit. Forms a tight complex with proteins S10 and S14.

In terms of biological role, binds the lower part of the 30S subunit head. Binds mRNA in the 70S ribosome, positioning it for translation. This Francisella tularensis subsp. tularensis (strain FSC 198) protein is Small ribosomal subunit protein uS3.